The primary structure comprises 122 residues: S-adenosylmethionine decarboxylase proenzyme (122 aa).

S63 functions as the Schiff-base intermediate with substrate; via pyruvic acid in the catalytic mechanism. At S63 the chain carries Pyruvic acid (Ser); by autocatalysis. H68 functions as the Proton acceptor; for processing activity in the catalytic mechanism. C83 serves as the catalytic Proton donor; for catalytic activity.

Belongs to the prokaryotic AdoMetDC family. Type 1 subfamily. Heterotetramer of two alpha and two beta chains arranged as a dimer of alpha/beta heterodimers. Pyruvate is required as a cofactor. In terms of processing, is synthesized initially as an inactive proenzyme. Formation of the active enzyme involves a self-maturation process in which the active site pyruvoyl group is generated from an internal serine residue via an autocatalytic post-translational modification. Two non-identical subunits are generated from the proenzyme in this reaction, and the pyruvate is formed at the N-terminus of the alpha chain, which is derived from the carboxyl end of the proenzyme. The post-translation cleavage follows an unusual pathway, termed non-hydrolytic serinolysis, in which the side chain hydroxyl group of the serine supplies its oxygen atom to form the C-terminus of the beta chain, while the remainder of the serine residue undergoes an oxidative deamination to produce ammonia and the pyruvoyl group blocking the N-terminus of the alpha chain.

It carries out the reaction S-adenosyl-L-methionine + H(+) = S-adenosyl 3-(methylsulfanyl)propylamine + CO2. It functions in the pathway amine and polyamine biosynthesis; S-adenosylmethioninamine biosynthesis; S-adenosylmethioninamine from S-adenosyl-L-methionine: step 1/1. In terms of biological role, catalyzes the decarboxylation of S-adenosylmethionine to S-adenosylmethioninamine (dcAdoMet), the propylamine donor required for the synthesis of the polyamines spermine and spermidine from the diamine putrescine. The protein is S-adenosylmethionine decarboxylase proenzyme of Methanococcus vannielii (strain ATCC 35089 / DSM 1224 / JCM 13029 / OCM 148 / SB).